We begin with the raw amino-acid sequence, 230 residues long: UPF0688 protein C1orf174 homolog (230 aa).

Disordered stretches follow at residues 1–85 (MRSR…SLPK) and 97–166 (AEDS…VRAS). The segment covering 11-30 (RSSARLRARSYSSASLASAR) has biased composition (low complexity). Residues 31 to 48 (DVTSSTSAKTTCLASSSH) show a composition bias toward polar residues. Basic and acidic residues predominate over residues 49 to 78 (KATDRRTSKKFKYDKGHLVKAELQKLDPKS). Serine 180 is modified (phosphoserine).

Belongs to the UPF0688 family.

Its subcellular location is the nucleus. The protein is UPF0688 protein C1orf174 homolog of Mus musculus (Mouse).